A 383-amino-acid chain; its full sequence is Deoxyguanosinetriphosphate triphosphohydrolase-like protein (383 aa).

The HD domain maps to 62 to 198 (RLTHSLEVST…ASLADDISYI (137 aa)).

This sequence belongs to the dGTPase family. Type 2 subfamily.

This chain is Deoxyguanosinetriphosphate triphosphohydrolase-like protein, found in Rickettsia prowazekii (strain Madrid E).